We begin with the raw amino-acid sequence, 394 residues long: Actin-related protein 2-B (394 aa).

Residues Gly-160–Gly-162, Arg-214–Glu-218, and Gly-305–Tyr-310 contribute to the ATP site.

It belongs to the actin family. ARP2 subfamily. Component of the Arp2/3 complex composed of actr2/arp2, actr3/arp3, arpc1b, arpc2, arpc3, arpc4 and arpc5.

It localises to the cytoplasm. The protein localises to the cytoskeleton. It is found in the cell projection. Its subcellular location is the nucleus. In terms of biological role, ATP-binding component of the Arp2/3 complex, a multiprotein complex that mediates actin polymerization upon stimulation by nucleation-promoting factor (NPF). The Arp2/3 complex mediates the formation of branched actin networks in the cytoplasm, providing the force for cell motility. Seems to contact the pointed end of the daughter actin filament. In addition to its role in the cytoplasmic cytoskeleton, the Arp2/3 complex also promotes actin polymerization in the nucleus, thereby regulating gene transcription and repair of damaged DNA. The Arp2/3 complex promotes homologous recombination (HR) repair in response to DNA damage by promoting nuclear actin polymerization, leading to drive motility of double-strand breaks (DSBs). The polypeptide is Actin-related protein 2-B (actr2b) (Danio rerio (Zebrafish)).